A 235-amino-acid polypeptide reads, in one-letter code: Probable RNA 2'-phosphotransferase (235 aa).

It belongs to the KptA/TPT1 family.

Removes the 2'-phosphate from RNA via an intermediate in which the phosphate is ADP-ribosylated by NAD followed by a presumed transesterification to release the RNA and generate ADP-ribose 1''-2''-cyclic phosphate (APPR&gt;P). May function as an ADP-ribosylase. The sequence is that of Probable RNA 2'-phosphotransferase from Thermoplasma volcanium (strain ATCC 51530 / DSM 4299 / JCM 9571 / NBRC 15438 / GSS1).